A 548-amino-acid chain; its full sequence is Terpene synthase 1 (548 aa).

Mg(2+)-binding residues include D301, D305, D445, and E453. The short motif at 301–305 is the DDXXD motif element; the sequence is DDTYD.

It belongs to the terpene synthase family. Tpsa subfamily. Requires Mg(2+) as cofactor. Mn(2+) serves as cofactor.

It catalyses the reaction (2E,6E)-farnesyl diphosphate = (+)-valencene + diphosphate. It participates in secondary metabolite biosynthesis; terpenoid biosynthesis. In terms of biological role, sesquiterpene synthase involved in the biosynthesis of volatile compounds which contribute to fruit flavor and aroma. Mediates the conversion of (2E,6E)-farnesyl diphosphate (FPP) into (+)-valencene. No activity detected with geranyl diphosphate (GPP). The polypeptide is Terpene synthase 1 (Citrus sinensis (Sweet orange)).